A 177-amino-acid polypeptide reads, in one-letter code: Large ribosomal subunit protein uL6 (177 aa).

Belongs to the universal ribosomal protein uL6 family. As to quaternary structure, part of the 50S ribosomal subunit.

In terms of biological role, this protein binds to the 23S rRNA, and is important in its secondary structure. It is located near the subunit interface in the base of the L7/L12 stalk, and near the tRNA binding site of the peptidyltransferase center. The chain is Large ribosomal subunit protein uL6 from Aliivibrio salmonicida (strain LFI1238) (Vibrio salmonicida (strain LFI1238)).